Reading from the N-terminus, the 175-residue chain is Protein GrpE (175 aa).

This sequence belongs to the GrpE family. As to quaternary structure, homodimer.

The protein localises to the cytoplasm. Its function is as follows. Participates actively in the response to hyperosmotic and heat shock by preventing the aggregation of stress-denatured proteins, in association with DnaK and GrpE. It is the nucleotide exchange factor for DnaK and may function as a thermosensor. Unfolded proteins bind initially to DnaJ; upon interaction with the DnaJ-bound protein, DnaK hydrolyzes its bound ATP, resulting in the formation of a stable complex. GrpE releases ADP from DnaK; ATP binding to DnaK triggers the release of the substrate protein, thus completing the reaction cycle. Several rounds of ATP-dependent interactions between DnaJ, DnaK and GrpE are required for fully efficient folding. The chain is Protein GrpE from Thermoplasma acidophilum (strain ATCC 25905 / DSM 1728 / JCM 9062 / NBRC 15155 / AMRC-C165).